The chain runs to 472 residues: Adenosylhomocysteinase (472 aa).

T64, D138, and E198 together coordinate substrate. Residue 199-201 (TTT) coordinates NAD(+). Residues K228 and D232 each contribute to the substrate site. NAD(+) contacts are provided by residues N233, 262 to 267 (GFGDVG), E285, N320, 341 to 343 (IGH), and N386.

It belongs to the adenosylhomocysteinase family. It depends on NAD(+) as a cofactor.

The protein localises to the cytoplasm. It carries out the reaction S-adenosyl-L-homocysteine + H2O = L-homocysteine + adenosine. Its pathway is amino-acid biosynthesis; L-homocysteine biosynthesis; L-homocysteine from S-adenosyl-L-homocysteine: step 1/1. Functionally, may play a key role in the regulation of the intracellular concentration of adenosylhomocysteine. The protein is Adenosylhomocysteinase of Prochlorococcus marinus subsp. pastoris (strain CCMP1986 / NIES-2087 / MED4).